A 670-amino-acid polypeptide reads, in one-letter code: MDTFQLDSRFKPAGDQPEAIRQMVEGLEAGLSHQTLLGVTGSGKTFSIANVIAQVQRPTLVLAPNKTLAAQLYGEFKTFFPHNSVEYFVSYYDYYQPEAYVPSSDTYIEKDSSINDHIEQMRLSATKALLERPDAIIVATVSSIYGLGDPASYLKMVLHLDRGDRIDQRELLRRLTSLQYTRNDMDFARATFRVRGDVIDIFPAESDLEAIRVELFDDEVESLSAFDPLTGEVIRKLPRFTFYPKSHYVTPRETLLEAVDQIKAELKERLDYLRNNNKLVEAQRLEQRTRFDLEMILELGYCNGIENYSRYLSGRAPGEPPPTLYDYLPANSLLVIDESHVSVPQVGAMFKGDRSRKETLVEYGFRLPSALDNRPLRFEEWEAVSPQTIFVSATPGPYEAEHAGRVIEQVVRPTGLVDPEIEVRPAMTQVDDLLSQIRQRVAKDERVLVTTLTKRMAEDLTDYLGDHDVRVRYLHSDIDTVERVEIIRDLRAGAFDVLVGINLLREGLDMPEVSLVAILDADKEGFLRSERSLIQTIGRAARNLHGKAILYADNVTGSMQRAIDETERRRAKQIAFNEAHGIVPKGVRKDIKDILEGAVVPGARGKRKGVAKVAEESGRYENELRSPSEISKRIRQLEEKMYQLARDLEFEAAAQLRDEIQTLRERLVNV.

The Helicase ATP-binding domain occupies E25 to R412. G38–T45 provides a ligand contact to ATP. A Beta-hairpin motif is present at residues Y91–I114. In terms of domain architecture, Helicase C-terminal spans Q429–I582. A UVR domain is found at S631–R666.

The protein belongs to the UvrB family. Forms a heterotetramer with UvrA during the search for lesions. Interacts with UvrC in an incision complex.

The protein localises to the cytoplasm. Its function is as follows. The UvrABC repair system catalyzes the recognition and processing of DNA lesions. A damage recognition complex composed of 2 UvrA and 2 UvrB subunits scans DNA for abnormalities. Upon binding of the UvrA(2)B(2) complex to a putative damaged site, the DNA wraps around one UvrB monomer. DNA wrap is dependent on ATP binding by UvrB and probably causes local melting of the DNA helix, facilitating insertion of UvrB beta-hairpin between the DNA strands. Then UvrB probes one DNA strand for the presence of a lesion. If a lesion is found the UvrA subunits dissociate and the UvrB-DNA preincision complex is formed. This complex is subsequently bound by UvrC and the second UvrB is released. If no lesion is found, the DNA wraps around the other UvrB subunit that will check the other stand for damage. The sequence is that of UvrABC system protein B from Pseudomonas aeruginosa (strain ATCC 15692 / DSM 22644 / CIP 104116 / JCM 14847 / LMG 12228 / 1C / PRS 101 / PAO1).